A 154-amino-acid chain; its full sequence is Resuscitation-promoting factor RpfD (154 aa).

The helical transmembrane segment at 21–41 threads the bilayer; it reads IVCTVFIETAVVATMFVALLG.

This sequence belongs to the transglycosylase family. Rpf subfamily.

Its subcellular location is the cell membrane. Functionally, factor that stimulates resuscitation of dormant cells. Has peptidoglycan (PG) hydrolytic activity. PG fragments could either directly activate the resuscitation pathway of dormant bacteria or serve as a substrate for endogenous Rpf, resulting in low molecular weight products with resuscitation activity. The chain is Resuscitation-promoting factor RpfD (rpfD) from Mycobacterium tuberculosis (strain CDC 1551 / Oshkosh).